We begin with the raw amino-acid sequence, 341 residues long: Methionine import ATP-binding protein MetN 3 (341 aa).

Residues 2–241 (ILLENVKKIY…PQQDITKRFV (240 aa)) enclose the ABC transporter domain. Position 38–45 (38–45 (GYSGAGKS)) interacts with ATP.

It belongs to the ABC transporter superfamily. Methionine importer (TC 3.A.1.24) family. In terms of assembly, the complex is composed of two ATP-binding proteins (MetN), two transmembrane proteins (MetI) and a solute-binding protein (MetQ).

The protein localises to the cell membrane. The enzyme catalyses L-methionine(out) + ATP + H2O = L-methionine(in) + ADP + phosphate + H(+). The catalysed reaction is D-methionine(out) + ATP + H2O = D-methionine(in) + ADP + phosphate + H(+). Part of the ABC transporter complex MetNIQ involved in methionine import. Responsible for energy coupling to the transport system. In Bacillus anthracis, this protein is Methionine import ATP-binding protein MetN 3.